The chain runs to 246 residues: Small ribosomal subunit protein uS2 (246 aa).

The tract at residues 224-246 is disordered; that stretch reads AKQGEEEAEAAEETAPETETTTA. A compositionally biased stretch (acidic residues) spans 229-239; that stretch reads EEAEAAEETAP.

It belongs to the universal ribosomal protein uS2 family.

This is Small ribosomal subunit protein uS2 from Bacillus velezensis (strain DSM 23117 / BGSC 10A6 / LMG 26770 / FZB42) (Bacillus amyloliquefaciens subsp. plantarum).